The following is a 469-amino-acid chain: DNA-binding transcriptional regulator NtrC (469 aa).

Positions Ile5–Ile119 constitute a Response regulatory domain. Position 54 is a 4-aspartylphosphate (Asp54). Residues Ile140–Val369 enclose the Sigma-54 factor interaction domain. ATP-binding positions include Gly168–Glu175 and Ala231–Glu240. Positions Lys445 to Lys464 form a DNA-binding region, H-T-H motif.

Phosphorylated and dephosphorylated by NtrB.

It localises to the cytoplasm. In terms of biological role, member of the two-component regulatory system NtrB/NtrC, which controls expression of the nitrogen-regulated (ntr) genes in response to nitrogen limitation. Phosphorylated NtrC binds directly to DNA and stimulates the formation of open promoter-sigma54-RNA polymerase complexes. This is DNA-binding transcriptional regulator NtrC (glnG) from Escherichia coli O157:H7.